The chain runs to 352 residues: B1 bradykinin receptor (352 aa).

Topologically, residues 1 to 41 (MASWPPLELQSSNQSQLFPQNATACDNAPEAWDLLHRVLPT) are extracellular. 2 N-linked (GlcNAc...) asparagine glycosylation sites follow: N13 and N21. The helical transmembrane segment at 42 to 62 (FIISICSFGLLGNLFVLLVFL) threads the bilayer. The Cytoplasmic segment spans residues 63-72 (LPRRRLNVAE). The chain crosses the membrane as a helical span at residues 73–93 (IYLANLAASDLVFVLGLPFWA). The Extracellular segment spans residues 94-110 (ENIWNQFNWPFGALLCR). The cysteines at positions 109 and 188 are disulfide-linked. Residues 111–131 (VINGIIKANLFISIFLVVAIS) form a helical membrane-spanning segment. The Cytoplasmic segment spans residues 132 to 153 (QDRYCVLVHPMASRRRQRRRQA). Residues 154–174 (RVTCVLIWVVGGLLSIPTFLL) traverse the membrane as a helical segment. Over 175 to 206 (RSIQAVPDLNITACILLLPHEAWHFARIVELN) the chain is Extracellular. An N-linked (GlcNAc...) asparagine glycan is attached at N184. A helical transmembrane segment spans residues 207-227 (ILAFLLPLAAIIFFNYHILAS). Topologically, residues 228 to 250 (LRGREEVSRTRCGGSKDSKTTAL) are cytoplasmic. Residues 251–271 (ILTLVVAFLVCWAPYHFFAFL) traverse the membrane as a helical segment. Topologically, residues 272–294 (EFLFQVQAVRGCFWEDFIDLGLQ) are extracellular. The helical transmembrane segment at 295-315 (LANFLAFTNSSLNPVIYVFVG) threads the bilayer. The Cytoplasmic segment spans residues 316-352 (RLFRTKVWELYKQCTPKSLAPISSSHRKEIFQLFWRN). Residue C329 is the site of S-palmitoyl cysteine attachment.

The protein belongs to the G-protein coupled receptor 1 family. Bradykinin receptor subfamily. BDKRB1 sub-subfamily.

It is found in the cell membrane. In terms of biological role, this is a receptor for bradykinin. Could be a factor in chronic pain and inflammation. This is B1 bradykinin receptor (BDKRB1) from Macaca mulatta (Rhesus macaque).